The chain runs to 210 residues: Redox-sensing transcriptional repressor Rex (210 aa).

A DNA-binding region (H-T-H motif) is located at residues 16–55 (VYSRHLTDVDRKGIVTISSGDIAEGVGVSPAQVRKDLAYF). 90 to 95 (GMGNLG) contacts NAD(+).

The protein belongs to the transcriptional regulatory Rex family. In terms of assembly, homodimer.

It is found in the cytoplasm. Its function is as follows. Modulates transcription in response to changes in cellular NADH/NAD(+) redox state. The sequence is that of Redox-sensing transcriptional repressor Rex from Desulfitobacterium hafniense (strain DSM 10664 / DCB-2).